The following is a 109-amino-acid chain: uncharacterized protein (109 aa).

This is an uncharacterized protein from Treponema pallidum (strain Nichols).